The following is a 666-amino-acid chain: Probable potassium transport system protein Kup (666 aa).

Transmembrane regions (helical) follow at residues 16 to 36 (GFII…LYTM), 58 to 78 (ISLI…LIAL), 100 to 120 (PWLI…GALT), 141 to 161 (IYQN…VLFG), 165 to 185 (FGTG…FSFL), 221 to 241 (IFIL…YSDL), 253 to 273 (WPFV…WILA), 294 to 314 (VYLV…LISG), 343 to 363 (LYIP…VLYF), 373 to 393 (YGLA…YYLI), 399 to 419 (PFLA…FFWA), and 424 to 444 (FMHG…VMFI).

Belongs to the HAK/KUP transporter (TC 2.A.72) family.

The protein localises to the cell membrane. The catalysed reaction is K(+)(in) + H(+)(in) = K(+)(out) + H(+)(out). Transport of potassium into the cell. Likely operates as a K(+):H(+) symporter. The chain is Probable potassium transport system protein Kup from Streptococcus pyogenes serotype M6 (strain ATCC BAA-946 / MGAS10394).